We begin with the raw amino-acid sequence, 597 residues long: Plasmepsin V (597 aa).

Over 1 to 551 the chain is Lumenal; sequence MNNYFLRKEN…EKENIFLKVS (551 aa). A coiled-coil region spans residues 33-88; it reads CNNVENKIDNVGKKIENVGKKIGDMENKNDNVENKNDNVENKNDNVGNKNDNVKNA. Residues 58 to 75 show a composition bias toward basic and acidic residues; sequence ENKNDNVENKNDNVENKN. The disordered stretch occupies residues 58 to 83; it reads ENKNDNVENKNDNVENKNDNVGNKND. The 415-residue stretch at 107–521 folds into the Peptidase A1 domain; sequence YFLDIDIGKP…DLQQNQIAFI (415 aa). Asp125 is a catalytic residue. Cystine bridges form between Cys135-Cys218, Cys138-Cys141, Cys162-Cys173, Cys167-Cys178, Cys266-Cys525, Cys396-Cys441, and Cys450-Cys486. Over residues 289-298 the composition is skewed to basic and acidic residues; the sequence is KEKQKMDKSD. Positions 289 to 323 are disordered; sequence KEKQKMDKSDNNSSNKGNVSIKLKNNDKNDDEENN. Residues 299–311 are compositionally biased toward low complexity; sequence NNSSNKGNVSIKL. Asp372 is an active-site residue. The chain crosses the membrane as a helical span at residues 552–572; it reads YINLYCLWLLLALTILLSLIL. Over 573–597 the chain is Cytoplasmic; sequence YVRKMFYMDYFPLSDQNKSPIQEST.

This sequence belongs to the peptidase A1 family. Component of a complex composed of SPC25 and PMV; the interaction is mediated via the transmembrane domains. The complex interacts with the SEC61 channel-forming translocon complex and is involved in the recognition and import of PEXEL motif-containing proteins into the ER for subsequent export. It is not clear if the zymogen has a cleavable propeptide. In vitro, appears to be cleaved between Asn-87 and Ala-88. Cleavage of the putative propeptide is dispensable for catalytic activity.

Its subcellular location is the endoplasmic reticulum membrane. Functionally, during the asexual blood stage, plays an essential role in the export of several proteins into the host erythrocytes by cleaving the pentameric localization motif RxLxE/Q/D (termed Plasmodium export element (PEXEL)) located downstream of the N-terminal secretory signal sequence. Specifically, cleaves after the leucine residue in the RxLxE/Q/D (or RxLxxE) motif of exported proteins including RESA, EMP2, EMP3, KAHRP, RIF/Rifin and STEVOR. Also, by regulating protein export, plays an essential role in gametocyte development and thus parasite transmission to the mosquito vector. In Plasmodium falciparum (isolate HB3), this protein is Plasmepsin V.